Reading from the N-terminus, the 862-residue chain is Cone cGMP-specific 3',5'-cyclic phosphodiesterase subunit alpha' (862 aa).

2 GAF domains span residues 75–224 and 256–433; these read SMEK…SLVL and DIER…GWSV. Residues Ser-97, Asn-116, 169–172, and Thr-176 each bind 3',5'-cyclic GMP; that span reads DKKT. The PDEase domain occupies 486 to 819; sequence DEKDLIRILK…VEWKTRADEY (334 aa). His-562 functions as the Proton donor in the catalytic mechanism. A divalent metal cation is bound by residues His-566, His-602, Asp-603, and Asp-723. Over residues 830 to 842 the composition is skewed to basic and acidic residues; the sequence is KKKEEEAAAKKAE. A disordered region spans residues 830-862; it reads KKKEEEAAAKKAENAAGGGGGGEDGKSKTCIVL. Cys-859 is subject to Cysteine methyl ester. A lipid anchor (S-geranylgeranyl cysteine) is attached at Cys-859. A propeptide spans 860–862 (removed in mature form); that stretch reads IVL.

It belongs to the cyclic nucleotide phosphodiesterase family. In terms of assembly, composed of two alpha' subunits that are associated with 3 smaller proteins of 11, 13, and 15 kDa. Requires a divalent metal cation as cofactor.

Its subcellular location is the cell membrane. The enzyme catalyses 3',5'-cyclic GMP + H2O = GMP + H(+). As cone-specific cGMP phosphodiesterase, it plays an essential role in light detection and cone phototransduction by rapidly decreasing intracellular levels of cGMP. The protein is Cone cGMP-specific 3',5'-cyclic phosphodiesterase subunit alpha' (PDE6C) of Gallus gallus (Chicken).